The following is a 153-amino-acid chain: Myosin regulatory light chain (153 aa).

Ala1 is subject to Blocked amino end (Ala). EF-hand domains follow at residues 15–50 and 81–116; these read KQIQEMKEAFSMIDVDRDGFVSKDDIKAISEQLGRT and DSEETIRNAFAMFDEQENKKLNIEYIKDLLEDMGNN. Ca(2+)-binding residues include Asp28, Asp30, Asp32, and Asp39.

Functionally, in molluscan muscle, calcium regulation is associated with myosin rather than with actin. Muscle myosin contains two types of light chains: the catalytic light chain, essential for ATPase activity, and the regulatory light chain, a calcium-binding protein responsible for Ca(2+) dependent binding and Ca(2+) dependent Mg-ATPase activity. This Patinopecten sp. (Scallop) protein is Myosin regulatory light chain.